Reading from the N-terminus, the 117-residue chain is Immunoglobulin lambda variable 6-57 (117 aa).

Residues 1-19 (MAWAPLLLTLLAHCTGSWA) form the signal peptide. Residues 20–44 (NFMLTQPHSVSESPGKTVTISCTGS) are framework-1. The 98-residue stretch at 20-117 (NFMLTQPHSV…YYCQSYDSSN (98 aa)) folds into the Ig-like domain. An intrachain disulfide couples C41 to C110. The complementarity-determining-1 stretch occupies residues 45–52 (SGSIASNY). Residues 53–69 (VQWYQQRPGSAPTTVIY) form a framework-2 region. The tract at residues 65 to 97 (TTVIYEDNQRPSGVPDRFSGSIDSSSNSASLTI) is disordered. The segment at 70–72 (EDN) is complementarity-determining-2. Positions 73–110 (QRPSGVPDRFSGSIDSSSNSASLTISGLKTEDEADYYC) are framework-3. Over residues 83–97 (SGSIDSSSNSASLTI) the composition is skewed to low complexity. Residues 111 to 117 (QSYDSSN) form a complementarity-determining-3 region.

In terms of assembly, immunoglobulins are composed of two identical heavy chains and two identical light chains; disulfide-linked.

It is found in the secreted. It localises to the cell membrane. In terms of biological role, v region of the variable domain of immunoglobulin light chains that participates in the antigen recognition. Immunoglobulins, also known as antibodies, are membrane-bound or secreted glycoproteins produced by B lymphocytes. In the recognition phase of humoral immunity, the membrane-bound immunoglobulins serve as receptors which, upon binding of a specific antigen, trigger the clonal expansion and differentiation of B lymphocytes into immunoglobulins-secreting plasma cells. Secreted immunoglobulins mediate the effector phase of humoral immunity, which results in the elimination of bound antigens. The antigen binding site is formed by the variable domain of one heavy chain, together with that of its associated light chain. Thus, each immunoglobulin has two antigen binding sites with remarkable affinity for a particular antigen. The variable domains are assembled by a process called V-(D)-J rearrangement and can then be subjected to somatic hypermutations which, after exposure to antigen and selection, allow affinity maturation for a particular antigen. The protein is Immunoglobulin lambda variable 6-57 of Homo sapiens (Human).